A 99-amino-acid polypeptide reads, in one-letter code: uncharacterized protein (99 aa).

The N-terminal stretch at 1 to 17 (MMMNSFFPAMALMVLVG) is a signal peptide. A lipid anchor (N-palmitoyl cysteine) is attached at Cys-18. Cys-18 is lipidated: S-diacylglycerol cysteine.

It localises to the cell membrane. This is an uncharacterized protein from Escherichia coli O157:H7.